Reading from the N-terminus, the 261-residue chain is Indole-3-glycerol phosphate synthase (261 aa).

It belongs to the TrpC family.

It catalyses the reaction 1-(2-carboxyphenylamino)-1-deoxy-D-ribulose 5-phosphate + H(+) = (1S,2R)-1-C-(indol-3-yl)glycerol 3-phosphate + CO2 + H2O. It participates in amino-acid biosynthesis; L-tryptophan biosynthesis; L-tryptophan from chorismate: step 4/5. The sequence is that of Indole-3-glycerol phosphate synthase from Oceanobacillus iheyensis (strain DSM 14371 / CIP 107618 / JCM 11309 / KCTC 3954 / HTE831).